The following is a 288-amino-acid chain: NAD(P)H-hydrate epimerase (288 aa).

The N-terminal 48 residues, 1–48 (MSALRALLGLGLLAAGSRLRRVPGRAGACPAGSAWWEARRPHSGGGGE), are a transit peptide targeting the mitochondrion. The YjeF N-terminal domain occupies 65-275 (AQAVDEELFN…ALEKKYQLNL (211 aa)). A (6S)-NADPHX-binding site is contributed by 119–123 (NNGGD). Asn-120 provides a ligand contact to K(+). Residue Lys-144 is modified to N6-succinyllysine. Asp-185 lines the K(+) pocket. (6S)-NADPHX-binding positions include 189–195 (GFSFKGD) and Asp-218. Position 221 (Ser-221) interacts with K(+).

It belongs to the NnrE/AIBP family. In terms of assembly, homodimer. Interacts with APOA1 and APOA2. It depends on K(+) as a cofactor. Undergoes physiological phosphorylation during sperm capacitation, downstream to PKA activation.

It localises to the mitochondrion. The protein localises to the secreted. The enzyme catalyses (6R)-NADHX = (6S)-NADHX. It catalyses the reaction (6R)-NADPHX = (6S)-NADPHX. In terms of biological role, catalyzes the epimerization of the S- and R-forms of NAD(P)HX, a damaged form of NAD(P)H that is a result of enzymatic or heat-dependent hydration. This is a prerequisite for the S-specific NAD(P)H-hydrate dehydratase to allow the repair of both epimers of NAD(P)HX. Accelerates cholesterol efflux from endothelial cells to high-density lipoprotein (HDL) and thereby regulates angiogenesis. The chain is NAD(P)H-hydrate epimerase from Canis lupus familiaris (Dog).